We begin with the raw amino-acid sequence, 122 residues long: FAGGIVSQRCLSCICKMESGCRNVGCKMDMGSLSCGYFQIKEAYWIDCGRPGSSWKSCAASSYCASLCVQNYMKRYAKWAGCPLRCEGFAREHNGGPRGCKKGSTIGYWNRLQKISGCHGVQ.

Positions Gly-3–Cys-118 constitute an I-type lysozyme domain. Cystine bridges form between Cys-10–Cys-86, Cys-13–Cys-118, Cys-15–Cys-21, Cys-26–Cys-35, Cys-48–Cys-68, Cys-58–Cys-64, and Cys-82–Cys-100. The Proton donor role is filled by Glu-18. Asp-29 acts as the Nucleophile in catalysis. Lys-41–Asp-47 contributes to the substrate binding site. Residues Tyr-72, His-93, His-93 to Gly-95, and Lys-102 contribute to the substrate site.

It belongs to the glycosyl hydrolase 22 family. Type-I lysozyme subfamily. As to quaternary structure, monomer.

The protein localises to the secreted. It catalyses the reaction Hydrolysis of (1-&gt;4)-beta-linkages between N-acetylmuramic acid and N-acetyl-D-glucosamine residues in a peptidoglycan and between N-acetyl-D-glucosamine residues in chitodextrins.. In terms of biological role, has bacteriolytic activity against Gram-positive bacteria M.luteus. Also has chitinase activity. This is Lysozyme from Meretrix lusoria (Hard clam).